Here is a 766-residue protein sequence, read N- to C-terminus: 5-methyltetrahydropteroyltriglutamate--homocysteine methyltransferase (766 aa).

Residues 16-19 (RELK) and K124 each bind 5-methyltetrahydropteroyltri-L-glutamate. Residues 445–447 (IGS) and E498 contribute to the L-homocysteine site. L-methionine is bound by residues 445-447 (IGS) and E498. 5-methyltetrahydropteroyltri-L-glutamate-binding positions include 529 to 530 (RC) and W575. D613 lines the L-homocysteine pocket. D613 serves as a coordination point for L-methionine. Position 619 (E619) interacts with 5-methyltetrahydropteroyltri-L-glutamate. H655, C657, and E679 together coordinate Zn(2+). H708 (proton donor) is an active-site residue. Residue C740 coordinates Zn(2+).

This sequence belongs to the vitamin-B12 independent methionine synthase family. Zn(2+) is required as a cofactor.

It catalyses the reaction 5-methyltetrahydropteroyltri-L-glutamate + L-homocysteine = tetrahydropteroyltri-L-glutamate + L-methionine. The protein operates within amino-acid biosynthesis; L-methionine biosynthesis via de novo pathway; L-methionine from L-homocysteine (MetE route): step 1/1. Its function is as follows. Catalyzes the transfer of a methyl group from 5-methyltetrahydrofolate to homocysteine resulting in methionine formation. In Pseudomonas syringae pv. tomato (strain ATCC BAA-871 / DC3000), this protein is 5-methyltetrahydropteroyltriglutamate--homocysteine methyltransferase.